The primary structure comprises 425 residues: Histidine--tRNA ligase (425 aa).

The protein belongs to the class-II aminoacyl-tRNA synthetase family. As to quaternary structure, homodimer.

The protein localises to the cytoplasm. The catalysed reaction is tRNA(His) + L-histidine + ATP = L-histidyl-tRNA(His) + AMP + diphosphate + H(+). The polypeptide is Histidine--tRNA ligase (Aeromonas salmonicida (strain A449)).